Here is a 30-residue protein sequence, read N- to C-terminus: Dermaseptin-J10 (30 aa).

In terms of tissue distribution, expressed by the skin glands.

Its subcellular location is the secreted. Has antimicrobial activity. In Phasmahyla jandaia (Jandaia leaf frog), this protein is Dermaseptin-J10.